A 472-amino-acid chain; its full sequence is E1B 55 kDa protein (472 aa).

Residues 1 to 90 (MERPNPSVGG…GQRGEKRKLE (90 aa)) are disordered. Residues 32 to 44 (RLLAGAASARSGS) show a composition bias toward low complexity. Residues 45 to 57 (SAGGGGGGGGGGE) show a composition bias toward gly residues. Residues Ser-468 and Ser-469 each carry the phosphoserine modification.

This sequence belongs to the adenoviridae E1B 55 kDa protein family. Interacts with host PML-4 and PML-5; this interaction promotes efficient subnuclear targeting of E1B-55K to PML nuclear bodies. Interacts with E4-ORF3 protein. Interacts with E4-ORF6 protein.

The protein localises to the host nucleus. It is found in the host cytoplasm. Its function is as follows. Plays a major role to prevent cellular inhibition of viral genome replication. Assembles an SCF-like E3 ubiquitin ligase complex based on the cellular proteins ELOB, ELOC, CUL5 and RBX1, in cooperation with viral E4orf6. This viral RING-type ligase ubiquitinates cellular substrates and targets them to proteasomal degradation: TP53/p53, LIG4, MRE11-RAD50-NBS1 (MRN) complex, ITGA3, DAXX and BLM. E1B-55K probably acts as the substrate-specific adapter of the SCF-like E3 ubiquitin ligase complex. Degradation of host TP53/p53 activity is essential for preventing E1A-induced TP53 accumulation that would otherwise lead to cell apoptosis and growth arrest. E1B-55K also inactivates TP53 transcription-factor activity by binding its transactivation domain. E1B-55K also functions as a SUMO1 E3 ligase for TP53 which causes the latter to be sequestered in promyelocytic leukemia (PML) nuclear bodies thereby contributing to maximal inhibition of TP53 function. This Homo sapiens (Human) protein is E1B 55 kDa protein.